The primary structure comprises 192 residues: uncharacterized protein (192 aa).

This is an uncharacterized protein from Acidianus convivator (ATV).